Reading from the N-terminus, the 156-residue chain is Mediator of RNA polymerase II transcription subunit 28 (156 aa).

The interval 1–38 (MDYQQKPPQSSDPSPSPPDRPPGIRSPETPSNNQNNDI) is disordered. Residues 104 to 156 (PSRAESLKKDIAVMEEELKTKDELIKKHMRLFQESQKLVKEQIEKHRDELEKV) are a coiled coil.

The protein belongs to the Mediator complex subunit 28 family. Dimers. Component of the Mediator complex. Interacts with GEBPL.

It is found in the nucleus. Functionally, component of the Mediator complex, a coactivator involved in the regulated transcription of nearly all RNA polymerase II-dependent genes. Mediator functions as a bridge to convey information from gene-specific regulatory proteins to the basal RNA polymerase II transcription machinery. The Mediator complex, having a compact conformation in its free form, is recruited to promoters by direct interactions with regulatory proteins and serves for the assembly of a functional pre-initiation complex with RNA polymerase II and the general transcription factors. The protein is Mediator of RNA polymerase II transcription subunit 28 of Arabidopsis thaliana (Mouse-ear cress).